A 594-amino-acid polypeptide reads, in one-letter code: UvrABC system protein C (594 aa).

One can recognise a GIY-YIG domain in the interval 13 to 99 (NSSGVYQYFD…IKQLKPKYNI (87 aa)). Residues 205-240 (DRLIKELELKMERLSSKLRFEEALIYRDRIAKIQKI) enclose the UVR domain.

The protein belongs to the UvrC family. In terms of assembly, interacts with UvrB in an incision complex.

It localises to the cytoplasm. Its function is as follows. The UvrABC repair system catalyzes the recognition and processing of DNA lesions. UvrC both incises the 5' and 3' sides of the lesion. The N-terminal half is responsible for the 3' incision and the C-terminal half is responsible for the 5' incision. In Helicobacter pylori (strain P12), this protein is UvrABC system protein C.